The following is an 823-amino-acid chain: Translation initiation factor IF-2 (823 aa).

Disordered stretches follow at residues 30 to 66 and 156 to 192; these read VPPSLARGTSTGKSFTTVEVRSKKRRPGEYISHDDKR and TPSHSNKSGHDDRGGKKYAHGATGRHKEKEGVSIKKV. Over residues 36-48 the composition is skewed to polar residues; that stretch reads RGTSTGKSFTTVE. Over residues 56–66 the composition is skewed to basic and acidic residues; that stretch reads PGEYISHDDKR. The 170-residue stretch at 322-491 folds into the tr-type G domain; the sequence is PRPPVVTVMG…LLLAEMLELS (170 aa). The tract at residues 331-338 is G1; that stretch reads GHVDHGKT. 331–338 lines the GTP pocket; the sequence is GHVDHGKT. The G2 stretch occupies residues 356 to 360; sequence GITQH. The interval 377-380 is G3; it reads DTPG. GTP-binding positions include 377-381 and 431-434; these read DTPGH and NKID. Positions 431–434 are G4; it reads NKID. The G5 stretch occupies residues 467–469; sequence SAK.

Belongs to the TRAFAC class translation factor GTPase superfamily. Classic translation factor GTPase family. IF-2 subfamily.

The protein resides in the cytoplasm. In terms of biological role, one of the essential components for the initiation of protein synthesis. Protects formylmethionyl-tRNA from spontaneous hydrolysis and promotes its binding to the 30S ribosomal subunits. Also involved in the hydrolysis of GTP during the formation of the 70S ribosomal complex. This chain is Translation initiation factor IF-2, found in Anaplasma phagocytophilum (strain HZ).